Consider the following 505-residue polypeptide: Retinoic acid receptor gamma (505 aa).

2 disordered regions span residues 1–57 and 113–134; these read MMKF…SSKD and SLSV…PSPP. Composition is skewed to basic and acidic residues over residues 12–22 and 32–46; these read DGGERPEEEGK and MGKE…KEEA. Residues 52 to 142 form a modulating region; that stretch reads MSSSKDRICS…PPPPPRVYKP (91 aa). Polar residues predominate over residues 115-124; the sequence is SVETQSTSSE. NR C4-type zinc fingers lie at residues 143-163 and 179-203; these read CFVC…CEGC and CHRD…LQKC. Positions 143-208 form a DNA-binding region, nuclear receptor; the sequence is CFVCNDKSSG…RLQKCFEVGM (66 aa). A hinge region spans residues 209-237; that stretch reads SKEAVRNDRNKKKKEIKEEVVTDSYEMPP. Positions 238–472 constitute an NR LBD domain; the sequence is EMEALIQKVS…PLIREMLENP (235 aa). The disordered stretch occupies residues 462–505; that stretch reads PPLIREMLENPEAFEDDASPPPKSEQKPIKVEEKPGEKTSTKDP. Over residues 485-505 the composition is skewed to basic and acidic residues; sequence SEQKPIKVEEKPGEKTSTKDP.

Belongs to the nuclear hormone receptor family. NR1 subfamily. Heterodimer; with a RXR molecule. Binds DNA preferentially as a RAR/RXR heterodimer. Isoform Delta-1A and Isoform Delta-1B are most abundant in regenerating limbs, tails, and the anterior half of the lower jaw. Isoform Delta-2 is broadly and uniformly distributed.

The protein resides in the nucleus. Receptor for retinoic acid. Retinoic acid receptors bind as heterodimers to their target response elements in response to their ligands, all-trans or 9-cis retinoic acid, and regulate gene expression in various biological processes. The RAR/RXR heterodimers bind to the retinoic acid response elements (RARE) composed of tandem 5'-AGGTCA-3' sites known as DR1-DR5. This chain is Retinoic acid receptor gamma (RARG), found in Notophthalmus viridescens (Eastern newt).